We begin with the raw amino-acid sequence, 906 residues long: Microtubule-associated protein 6 (906 aa).

Residues 1–15 (MAWPCITRACCIARF) form a calmodulin-binding region. Residues Cys5, Cys10, and Cys11 are each lipidated (S-palmitoyl cysteine). Disordered regions lie at residues 37–56 (TEHP…ALAP), 65–411 (TQPA…RAVA), 441–651 (KPVK…GPVK), 674–782 (NKDS…TAPR), and 817–906 (AKDQ…EGSP). Positions 41 to 50 (GAPPQPPAPL) are enriched in pro residues. Positions 93-117 (AAPGRSGLGLGAASASTSGSGPADS) are enriched in low complexity. At Ser98 the chain carries Phosphoserine. Residues 116 to 139 (DSVMRQDYRAWKVQRPEPSCRPRS) form a mn 1 region. Residues 119–139 (MRQDYRAWKVQRPEPSCRPRS) are compositionally biased toward basic and acidic residues. Positions 124–138 (RAWKVQRPEPSCRPR) are calmodulin-binding. Tyr141 carries the post-translational modification Phosphotyrosine. The span at 147–171 (PFERETQYQKDFRAWPLPRRGDHPW) shows a compositional bias: basic and acidic residues. The interval 151–174 (ETQYQKDFRAWPLPRRGDHPWIPK) is mn 2. Residues 160–174 (AWPLPRRGDHPWIPK) form a calmodulin-binding region. The residue at position 185 (Ser185) is a Phosphoserine. The tract at residues 187 to 201 (PVLGVPKRRPQSQER) is calmodulin-binding. Ser207 is modified (phosphoserine). One copy of the Mc-1 repeat lies at 222-267 (LAAGKASGVDQRDTRRKAGPAWMVTRNEGHEEKPLPPAQSQTQEGG). Residues 222–405 (LAAGKASGVD…HAQGTGPEGG (184 aa)) form a 4 X approximate tandem repeat Mc region. Calmodulin-binding stretches follow at residues 235–249 (TRRK…TRNE), 280–294 (DTRR…VTRS), 325–339 (RDTR…MVTR), 375–389 (RKAG…SEGH), 435–449 (RAWT…IKAK), 486–500 (RRRI…FKEC), and 513–527 (PKKT…RKAK). A Mc-2 repeat occupies 268–313 (PAAGKASGADQRDTRRKAGPAWMVTRSEGHEEKPLPPAQSQTQEGG). One copy of the Mc-3 repeat lies at 314 to 359 (PAAGKASGADQRDTRRKAGPAWMVTRTEGHEETPLPPAQSQTQEGG). One copy of the Mc-4 repeat lies at 360–405 (PAAGKASGADERDTRRKAGPAWMVRRSEGHEQTPAAHAQGTGPEGG). The tract at residues 427-450 (SSSYRNEFRAWTDIKPVKPIKAKP) is mn 3. Positions 496–505 (PFKECPKVEK) are enriched in basic and acidic residues. A compositionally biased stretch (basic residues) spans 512–527 (KPKKTSTSHKPPRKAK). A compositionally biased stretch (basic and acidic residues) spans 549–573 (KPDDKEQSKEMNNKLAEAKESRVKP). Phosphoserine is present on residues Ser632 and Ser687. Positions 695-711 (KNQSPVVPASTKDQSFP) are enriched in polar residues. Positions 715-742 (PRKDPGPVIPEPEKDRAPTVPERRKDQH) are enriched in basic and acidic residues. Ser905 carries the phosphoserine modification.

Belongs to the STOP family. As to quaternary structure, interacts with calmodulin (via C-terminus); the interaction is dependent on Ca(2+). Interacts (via C-terminus) with TMEM106B (via N-terminus). Interacts with ZDHHC13 (via ANK repeats). Interacts with ZDHHC17 (via ANK repeats). Palmitoylated. Probably depalmitoylated by ABHD17A, ABHD17B and ABHD17C. During neuronal polarization, palmitoylation and depalmitoylation cycles regulate MAP6 shuttling between secretory vesicles and microtubules, and its polarized distribution in the axon. Isoform 1 is specifically expressed in adult brain. Isoform 2 is predominantly expressed in embryonic brain; expression persists at low levels in the adult brain. Isoform 3 is expressed at high levels in lung and at lower levels in testis, heart, muscle and kidney (at protein level). Oligodendrocytes express a major isoform of 89 kDa (O-STOP). Astrocytes also express an isoform of 60 kDa (A-STOP).

The protein resides in the cytoplasm. Its subcellular location is the cytoskeleton. It localises to the golgi apparatus. It is found in the cell projection. The protein localises to the axon. The protein resides in the dendrite. Its subcellular location is the cytoplasmic vesicle. It localises to the secretory vesicle membrane. In terms of biological role, involved in microtubule stabilization in many cell types, including neuronal cells. Specifically has microtubule cold stabilizing activity. Involved in dendrite morphogenesis and maintenance by regulating lysosomal trafficking via its interaction with TMEM106B. Regulates KIF5A-mediated axonal cargo transport. Regulates axonal growth during neuron polarization. The polypeptide is Microtubule-associated protein 6 (Map6) (Mus musculus (Mouse)).